Here is a 380-residue protein sequence, read N- to C-terminus: Cytochrome b (380 aa).

Transmembrane regions (helical) follow at residues 33 to 53 (FGSL…FLAM), 77 to 98 (WLIR…YMHI), 113 to 133 (WNIG…GYVL), and 178 to 198 (FFAF…LHLL). The heme b site is built by histidine 83 and histidine 97. Heme b contacts are provided by histidine 182 and histidine 196. Histidine 201 contacts a ubiquinone. 4 helical membrane-spanning segments follow: residues 226-246 (YKDL…ALFA), 288-308 (LGGV…PILH), 320-340 (LTQF…WIGG), and 347-367 (FIII…VLAP).

It belongs to the cytochrome b family. As to quaternary structure, the cytochrome bc1 complex contains 3 respiratory subunits (MT-CYB, CYC1 and UQCRFS1), 2 core proteins (UQCRC1 and UQCRC2) and probably 6 low-molecular weight proteins. Requires heme b as cofactor.

It localises to the mitochondrion inner membrane. Functionally, component of the ubiquinol-cytochrome c reductase complex (complex III or cytochrome b-c1 complex) that is part of the mitochondrial respiratory chain. The b-c1 complex mediates electron transfer from ubiquinol to cytochrome c. Contributes to the generation of a proton gradient across the mitochondrial membrane that is then used for ATP synthesis. The polypeptide is Cytochrome b (mt-cyb) (Salmo salar (Atlantic salmon)).